The primary structure comprises 37 residues: Large ribosomal subunit protein bL36 (37 aa).

Belongs to the bacterial ribosomal protein bL36 family.

This Histophilus somni (strain 129Pt) (Haemophilus somnus) protein is Large ribosomal subunit protein bL36.